A 183-amino-acid chain; its full sequence is Ribose 1,5-bisphosphate phosphokinase PhnN (183 aa).

It belongs to the ribose 1,5-bisphosphokinase family.

It catalyses the reaction alpha-D-ribose 1,5-bisphosphate + ATP = 5-phospho-alpha-D-ribose 1-diphosphate + ADP. It functions in the pathway metabolic intermediate biosynthesis; 5-phospho-alpha-D-ribose 1-diphosphate biosynthesis; 5-phospho-alpha-D-ribose 1-diphosphate from D-ribose 5-phosphate (route II): step 3/3. Catalyzes the phosphorylation of ribose 1,5-bisphosphate to 5-phospho-D-ribosyl alpha-1-diphosphate (PRPP). The chain is Ribose 1,5-bisphosphate phosphokinase PhnN from Azotobacter vinelandii (strain DJ / ATCC BAA-1303).